The primary structure comprises 472 residues: MSNMEQDRWSRVKGRLRSSVGEDVYSSWFARMDLESVHDESVHLSVPTRFLKSWIQTHYSDKVLSCWQAELPEVNRVDLTVRSPVRCATPAKEVPAPVESRRDEQRPSAERSNGATPVSANHDALGGSPLDPRLTFASFVVGRSNTLAHAAAKQVAEGRRGDPVMFNPLYIHSGVGLGKTHLLQAVTWAGNAGTERKVLYLTAEKFMYGFVAALKTQTSLAFKEALRGIDVLVIDDLQFLQGKTTQAEFCHTLNALIDAGRQVVVAADRPPADLESLDERVRSRLAGGLVVEMAPLGEDLRLGILRSRVVAARTHHASFDVPQPVLEYLARTITHNGRDLEGAINRLLAHSKLNNQPVTLEMAEHEVRDLIRPSEPKRIKIEDIQRIVARQYNVSRSDLLSSRRTANVVRPRQVAMYLAKTLTLRSLPEIGRRFGGRDHTTVLHAVRKIEGLVSKDTTLSDEVESLKRQLQE.

The tract at residues 1 to 73 is domain I, interacts with DnaA modulators; that stretch reads MSNMEQDRWS…LSCWQAELPE (73 aa). The tract at residues 73-128 is domain II; the sequence is EVNRVDLTVRSPVRCATPAKEVPAPVESRRDEQRPSAERSNGATPVSANHDALGGS. The segment at 90 to 124 is disordered; sequence PAKEVPAPVESRRDEQRPSAERSNGATPVSANHDA. Residues 99-109 show a composition bias toward basic and acidic residues; sequence ESRRDEQRPSA. Positions 110 to 119 are enriched in polar residues; that stretch reads ERSNGATPVS. Positions 129–351 are domain III, AAA+ region; that stretch reads PLDPRLTFAS…GAINRLLAHS (223 aa). Glycine 176, glycine 178, lysine 179, and threonine 180 together coordinate ATP. Residues 352–472 form a domain IV, binds dsDNA region; it reads KLNNQPVTLE…VESLKRQLQE (121 aa).

This sequence belongs to the DnaA family. As to quaternary structure, oligomerizes as a right-handed, spiral filament on DNA at oriC.

It is found in the cytoplasm. In terms of biological role, plays an essential role in the initiation and regulation of chromosomal replication. ATP-DnaA binds to the origin of replication (oriC) to initiate formation of the DNA replication initiation complex once per cell cycle. Binds the DnaA box (a 9 base pair repeat at the origin) and separates the double-stranded (ds)DNA. Forms a right-handed helical filament on oriC DNA; dsDNA binds to the exterior of the filament while single-stranded (ss)DNA is stabiized in the filament's interior. The ATP-DnaA-oriC complex binds and stabilizes one strand of the AT-rich DNA unwinding element (DUE), permitting loading of DNA polymerase. After initiation quickly degrades to an ADP-DnaA complex that is not apt for DNA replication. Binds acidic phospholipids. The sequence is that of Chromosomal replication initiator protein DnaA from Rhodopseudomonas palustris (strain ATCC BAA-98 / CGA009).